Consider the following 384-residue polypeptide: UDP-N-acetylglucosamine--N-acetylmuramyl-(pentapeptide) pyrophosphoryl-undecaprenol N-acetylglucosamine transferase (384 aa).

UDP-N-acetyl-alpha-D-glucosamine is bound by residues 22–24, R179, S209, and Q312; that span reads TGG.

The protein belongs to the glycosyltransferase 28 family. MurG subfamily.

The protein localises to the cell inner membrane. The catalysed reaction is di-trans,octa-cis-undecaprenyl diphospho-N-acetyl-alpha-D-muramoyl-L-alanyl-D-glutamyl-meso-2,6-diaminopimeloyl-D-alanyl-D-alanine + UDP-N-acetyl-alpha-D-glucosamine = di-trans,octa-cis-undecaprenyl diphospho-[N-acetyl-alpha-D-glucosaminyl-(1-&gt;4)]-N-acetyl-alpha-D-muramoyl-L-alanyl-D-glutamyl-meso-2,6-diaminopimeloyl-D-alanyl-D-alanine + UDP + H(+). It participates in cell wall biogenesis; peptidoglycan biosynthesis. Functionally, cell wall formation. Catalyzes the transfer of a GlcNAc subunit on undecaprenyl-pyrophosphoryl-MurNAc-pentapeptide (lipid intermediate I) to form undecaprenyl-pyrophosphoryl-MurNAc-(pentapeptide)GlcNAc (lipid intermediate II). The sequence is that of UDP-N-acetylglucosamine--N-acetylmuramyl-(pentapeptide) pyrophosphoryl-undecaprenol N-acetylglucosamine transferase from Treponema pallidum (strain Nichols).